Here is a 230-residue protein sequence, read N- to C-terminus: Large ribosomal subunit protein uL1 (230 aa).

The protein belongs to the universal ribosomal protein uL1 family. Part of the 50S ribosomal subunit.

In terms of biological role, binds directly to 23S rRNA. The L1 stalk is quite mobile in the ribosome, and is involved in E site tRNA release. Its function is as follows. Protein L1 is also a translational repressor protein, it controls the translation of the L11 operon by binding to its mRNA. In Oenococcus oeni (strain ATCC BAA-331 / PSU-1), this protein is Large ribosomal subunit protein uL1.